The sequence spans 587 residues: Protein SIX6OS1 (587 aa).

Positions 356–378 (TPQKQSNSNQWSEKGDKDAEYGD) are disordered. Positions 357–367 (PQKQSNSNQWS) are enriched in polar residues. Residues 368–378 (EKGDKDAEYGD) show a composition bias toward basic and acidic residues. The residue at position 439 (Ser439) is a Phosphoserine. The segment at 568–587 (SSSLKGFSSSSQNTTQFTFF) is disordered.

Interacts with SYCE1. Interacts with proteasome subunit PSMA8; to participate in meiosis progression during spermatogenesis. As to expression, highest expression in retina, skeletal muscle, testis and colon.

It is found in the chromosome. Functionally, meiotic protein that localizes to the central element of the synaptonemal complex and is required for chromosome synapsis during meiotic recombination. Required for the appropriate processing of intermediate recombination nodules before crossover formation. The sequence is that of Protein SIX6OS1 from Homo sapiens (Human).